Reading from the N-terminus, the 371-residue chain is Probable L-aspartate decarboxylase (371 aa).

At Lys232 the chain carries N6-(pyridoxal phosphate)lysine.

This sequence belongs to the group II decarboxylase family. MfnA subfamily. Pyridoxal 5'-phosphate serves as cofactor.

The enzyme catalyses L-aspartate + H(+) = beta-alanine + CO2. Its pathway is cofactor biosynthesis; coenzyme A biosynthesis. Catalyzes the decarboxylation of L-aspartate to produce beta-alanine. The polypeptide is Probable L-aspartate decarboxylase (Pyrococcus furiosus (strain ATCC 43587 / DSM 3638 / JCM 8422 / Vc1)).